Consider the following 1429-residue polypeptide: Protein lin-12 (1429 aa).

A signal peptide spans 1-15; that stretch reads MRIPTICFLFLLISL. Topologically, residues 16-908 are extracellular; sequence SKSLHIGSCL…GNNTGFLSWN (893 aa). 2 consecutive EGF-like domains span residues 20 to 61 and 114 to 150; these read HIGS…EYCE and TQGWCYPSVCMNGGQCIGAGNRAKCACPDGFKGERCE. 9 disulfides stabilise this stretch: cysteine 24/cysteine 35, cysteine 29/cysteine 49, cysteine 51/cysteine 60, cysteine 118/cysteine 129, cysteine 123/cysteine 138, cysteine 140/cysteine 149, cysteine 156/cysteine 169, cysteine 163/cysteine 178, and cysteine 180/cysteine 189. Asparagine 41 carries an N-linked (GlcNAc...) asparagine glycan. The EGF-like 3; calcium-binding domain maps to 152–190; that stretch reads DVNECEENKNACGNRSTCMNTLGTYICVCPQGFLPPDCL. Asparagine 165 is a glycosylation site (N-linked (GlcNAc...) asparagine). The N-linked (GlcNAc...) asparagine glycan is linked to asparagine 194. 4 consecutive EGF-like domains span residues 201-246, 250-285, 287-323, and 323-363; these read KQPV…STCE, KEDSCASNPCSHGVCISFSGGFQCICDDGYSGSYCQ, GKDNCVNNKCEAGSKCINGVNSYFCDCPPERTGPYCE, and EKMD…ILCE. 30 cysteine pairs are disulfide-bonded: cysteine 205-cysteine 227, cysteine 221-cysteine 234, cysteine 236-cysteine 245, cysteine 254-cysteine 264, cysteine 259-cysteine 273, cysteine 275-cysteine 284, cysteine 291-cysteine 302, cysteine 296-cysteine 311, cysteine 313-cysteine 322, cysteine 327-cysteine 339, cysteine 334-cysteine 351, cysteine 353-cysteine 362, cysteine 369-cysteine 381, cysteine 375-cysteine 390, cysteine 392-cysteine 401, cysteine 408-cysteine 419, cysteine 413-cysteine 429, cysteine 431-cysteine 440, cysteine 462-cysteine 475, cysteine 469-cysteine 480, cysteine 482-cysteine 491, cysteine 507-cysteine 518, cysteine 512-cysteine 529, cysteine 531-cysteine 540, cysteine 547-cysteine 558, cysteine 552-cysteine 567, cysteine 569-cysteine 578, cysteine 586-cysteine 597, cysteine 591-cysteine 607, and cysteine 609-cysteine 618. An EGF-like 8; calcium-binding domain is found at 365-402; the sequence is DKNECLSENMCLNNGTCVNLPGSFRCDCARGFGGKWCD. Asparagine 378 carries an N-linked (GlcNAc...) asparagine glycan. EGF-like domains lie at 404-441, 449-492, 503-541, 543-579, and 582-619; these read PLNMCQDFHCENDGTCMHTSDHSPVCQCKNGFIGKRCE, GGVR…NQCE, SENLCLSDPCMNNATCIDVDAHIGYACICKQGFEGDICE, HKDLCLENPCSNGGVCHQHRESFSCDCPPGFYGNGCE, and KMFRCLKSTCQNGGVCINEEEKGRKCECSYGFSGARCE. Residue asparagine 515 is glycosylated (N-linked (GlcNAc...) asparagine). The N-linked (GlcNAc...) asparagine glycan is linked to asparagine 623. Cystine bridges form between cysteine 638-cysteine 661, cysteine 643-cysteine 656, cysteine 652-cysteine 668, cysteine 678-cysteine 702, cysteine 684-cysteine 697, cysteine 693-cysteine 709, cysteine 716-cysteine 742, cysteine 724-cysteine 737, and cysteine 733-cysteine 749. LNR repeat units lie at residues 638-674, 678-709, and 716-754; these read CEKRKCSERANDGNCDADCNYAACKFDGGDCSGKREP, CRYGNMCADFFANGVCNQACNNEECLYDGMDC, and CPVKIREHCASRFANGICDPECNTNGCGFDGGDCDNETN. Asparagine 751, asparagine 754, and asparagine 900 each carry an N-linked (GlcNAc...) asparagine glycan. A helical transmembrane segment spans residues 909–931; it reads ALLLIGAGCLIVMVVLMLGALPG. Residues 932-1429 are Cytoplasmic-facing; it reads NRTRKRRMIN…TRYSEPAHYF (498 aa). The segment at 933–952 is RAM domain; sequence RTRKRRMINASVWMPPMENE. 5 ANK repeats span residues 1093–1122, 1126–1158, 1162–1194, 1206–1236, and 1240–1269; these read DENTPLMLAVLARRRRLVAYLMKAGADPTI, SERSALHQAAANRDFGMMVYMLNSTKLKGDIEE, NGMTALMIVAHNEGRDQVASAKLLVEKGAKVDY, KGRTALHYAAQVSNMPIVKYLVGEKGSNKDK, and DGKTPIMLAAQEGRIEVVMYLIQQGASVEA. The interval 1308 to 1374 is disordered; sequence IQHTHQPQPS…TTHTTPTSLN (67 aa). Over residues 1319–1330 the composition is skewed to basic residues; it reads KVTRAPKKQTSR. Polar residues predominate over residues 1361-1374; sequence HFMNTTHTTPTSLN.

It belongs to the NOTCH family. In terms of assembly, may interact with dsl-1. May interact with lag-2. May interact with osm-11. Interacts with sel-10. As to quaternary structure, when activated, the lin-12/Notch intracellular domain (NICD) can become a component of a complex consisting of at least the NICD, lag-1 and sel-8/lag-3. The NICD probably facilitates ordered assembly of the ternary complex via allosteric interactions of its RBP-j associated molecule (RAM) domain with lag-1. In terms of processing, upon binding its ligands, it is cleaved (S2 cleavage) in its extracellular domain, close to the transmembrane domain. S2 cleavage is probably mediated by the metalloproteases adm-4 and sup-17. It is then cleaved (S3 cleavage) downstream of its transmembrane domain, releasing it from the cell membrane; S3 cleavage requires a multiprotein gamma-secretase complex, which may include presenilin sel-12.

It localises to the apical cell membrane. Its subcellular location is the nucleus. Its function is as follows. Essential signaling protein which has a major role in many developmental processes; involved in cell fate decisions that require cell-cell interactions. Probable membrane-bound receptor for putative ligands lag-2, apx-1, dsl-1 and osm-11. Upon ligand activation, and releasing from the cell membrane, the lin-12/Notch intracellular domain (NICD) forms a transcriptional activator complex with lag-1 and lag-3 and regulates expression of various genes. Required for ventral cell fates in the postembryonic mesodermal lineage (M lineage) and in uterine precursor cells. Activity in cell fate decisions and tumorigenesis is negatively regulated by sel-10. Best known for involvement in cell-fate decisions during development, but also plays roles in other events. Regulates recovery from the dauer larval state. Modulates chemosensory avoidance of octanol and quiescence during molting. Promotes basement membrane mobility during tissue remodeling. Involved in establishing left-right asymmetry during intestinal organogenesis. The protein is Protein lin-12 of Caenorhabditis elegans.